The following is a 100-amino-acid chain: NADH-quinone oxidoreductase subunit K (100 aa).

The next 3 helical transmembrane spans lie at 4–24, 28–48, and 60–80; these read LQHG…GLVI, LLFM…AFVV, and IMYI…LALL.

The protein belongs to the complex I subunit 4L family. NDH-1 is composed of 13 different subunits. Subunits NuoA, H, J, K, L, M, N constitute the membrane sector of the complex.

Its subcellular location is the cell inner membrane. The enzyme catalyses a quinone + NADH + 5 H(+)(in) = a quinol + NAD(+) + 4 H(+)(out). In terms of biological role, NDH-1 shuttles electrons from NADH, via FMN and iron-sulfur (Fe-S) centers, to quinones in the respiratory chain. The immediate electron acceptor for the enzyme in this species is believed to be ubiquinone. Couples the redox reaction to proton translocation (for every two electrons transferred, four hydrogen ions are translocated across the cytoplasmic membrane), and thus conserves the redox energy in a proton gradient. The sequence is that of NADH-quinone oxidoreductase subunit K from Cronobacter sakazakii (strain ATCC BAA-894) (Enterobacter sakazakii).